A 102-amino-acid chain; its full sequence is Small ribosomal subunit protein uS10 (102 aa).

This sequence belongs to the universal ribosomal protein uS10 family. In terms of assembly, part of the 30S ribosomal subunit.

In terms of biological role, involved in the binding of tRNA to the ribosomes. The chain is Small ribosomal subunit protein uS10 from Thermosipho africanus (strain TCF52B).